The following is a 712-amino-acid chain: Asp/Glu-specific dipeptidyl-peptidase (712 aa).

A signal peptide spans methionine 1 to glycine 18. Catalysis depends on charge relay system residues histidine 84, aspartate 220, and serine 647.

The protein belongs to the peptidase S46 family.

Its function is as follows. Catalyzes the removal of dipeptides from the N-terminus of oligopeptides. Shows a strict specificity for acidic residues (Asp or Glu) in the P1 position, and has probably a hydrophobic residue preference at the P2 position. Preferentially cleaves the synthetic substrate Leu-Asp-methylcoumaryl-7-amide (Leu-Asp-MCA) as compared to Leu-Glu-MCA. In Capnocytophaga gingivalis, this protein is Asp/Glu-specific dipeptidyl-peptidase (dpp11).